We begin with the raw amino-acid sequence, 259 residues long: UPF0246 protein PputGB1_4560 (259 aa).

Belongs to the UPF0246 family.

The chain is UPF0246 protein PputGB1_4560 from Pseudomonas putida (strain GB-1).